We begin with the raw amino-acid sequence, 406 residues long: Nuclear hormone receptor family member nhr-133 (406 aa).

Positions 8 to 83 form a DNA-binding region, nuclear receptor; the sequence is SGPCEICEQP…VGMNSSKFQN (76 aa). The segment at 11–31 adopts an NR C4-type zinc-finger fold; sequence CEICEQPAHGNHFGVLSCRAC. The NR C4-type; degenerate zinc-finger motif lies at 47–66; the sequence is DRVCRKGNCIGNDLYRCKIC. In terms of domain architecture, NR LBD spans 150–406; sequence YSWSPNHYPN…YSHPEMFEFS (257 aa).

The protein belongs to the nuclear hormone receptor family.

The protein resides in the nucleus. Orphan nuclear receptor. This is Nuclear hormone receptor family member nhr-133 from Caenorhabditis elegans.